The sequence spans 502 residues: Phenylacetaldehyde dehydrogenase (502 aa).

251–256 (GSTEVG) contacts NAD(+). Residues E273 and C307 contribute to the active site.

The protein belongs to the aldehyde dehydrogenase family.

The enzyme catalyses 2-phenylacetaldehyde + NAD(+) + H2O = 2-phenylacetate + NADH + 2 H(+). It participates in aromatic compound metabolism. In terms of biological role, phenylacetaldehyde dehydrogenase that catalyzes the last step in the aerobic styrene degradation pathway by mediating oxidation of phenylacetaldehyde to phenylacetic acid. The polypeptide is Phenylacetaldehyde dehydrogenase (styD) (Pseudomonas fluorescens).